A 168-amino-acid chain; its full sequence is MFRSIAVLSALLFAFASAKTCKYDSSDFEVYWRFANNSINMQFMNTDIKNNEWTGVGFGDDKNNFVGVFFMVSNNQVTVRTGSTTQHGPPTFTQSGTNTASVSTQALNYFPEDKTMSAVVQIPIQFNGRSLQSCQKWRFVKSGKIENGQLTRNDKSPKEKKVCPMECN.

A signal peptide spans 1–18 (MFRSIAVLSALLFAFASA). The DOMON domain occupies 26-143 (SDFEVYWRFA…CQKWRFVKSG (118 aa)). Residue Asn36 is glycosylated (N-linked (GlcNAc...) asparagine). The interval 148 to 168 (GQLTRNDKSPKEKKVCPMECN) is disordered. Residues 152-168 (RNDKSPKEKKVCPMECN) are compositionally biased toward basic and acidic residues.

Its subcellular location is the secreted. The chain is DOMON domain-containing protein Y73F4A.2 from Caenorhabditis elegans.